A 285-amino-acid chain; its full sequence is uncharacterized protein (285 aa).

One can recognise an HTH araC/xylS-type domain in the interval His184 to Arg282. 2 consecutive DNA-binding regions (H-T-H motif) follow at residues Glu201–Gly222 and Ile249–Phe272.

This is an uncharacterized protein from Escherichia coli (strain K12).